Here is a 357-residue protein sequence, read N- to C-terminus: MAEVNVSLGERSYTIYIGNALLPNYVERLPHKLNQQLLVITNPTISQYYLKPLLKSLAGHQVKVFEMRDGEQFKSLDSYAEAMDILIDAGFNRDCGIIALGGGVVGDLAGFVASTFQRGVDFYQIPTTLLSQVDSSVGGKTAVNHPQGKNLIGAFYQPKSVVIDIDCLQTLTERDYRSGLAEIVKYGVIYDADFFQWLEQHAKELNQQDPAALTYAIQRSCEIKAEVVALDEREKGLRALLNLGHTFGHAIEAATEYGAWTHGEAVAAGIIIASKLSEVTQRLNSSDFRRIKDLLLALSLPTKGPQMPWQDWLDYMQRDKKVKDGQLHFVLPVAIGQAEVVSTVEHNTVTAVITECC.

NAD(+) contacts are provided by residues 69-74 (DGEQFK), 103-107 (GVVGD), 127-128 (TT), K140, K149, and 167-170 (CLQT). Zn(2+) contacts are provided by E182, H245, and H262.

The protein belongs to the sugar phosphate cyclases superfamily. Dehydroquinate synthase family. Co(2+) is required as a cofactor. Requires Zn(2+) as cofactor. NAD(+) serves as cofactor.

It is found in the cytoplasm. It carries out the reaction 7-phospho-2-dehydro-3-deoxy-D-arabino-heptonate = 3-dehydroquinate + phosphate. The protein operates within metabolic intermediate biosynthesis; chorismate biosynthesis; chorismate from D-erythrose 4-phosphate and phosphoenolpyruvate: step 2/7. Catalyzes the conversion of 3-deoxy-D-arabino-heptulosonate 7-phosphate (DAHP) to dehydroquinate (DHQ). This Idiomarina loihiensis (strain ATCC BAA-735 / DSM 15497 / L2-TR) protein is 3-dehydroquinate synthase.